A 303-amino-acid chain; its full sequence is Elongation factor Ts (303 aa).

An involved in Mg(2+) ion dislocation from EF-Tu region spans residues 79–82 (TDFV).

The protein belongs to the EF-Ts family.

The protein localises to the cytoplasm. In terms of biological role, associates with the EF-Tu.GDP complex and induces the exchange of GDP to GTP. It remains bound to the aminoacyl-tRNA.EF-Tu.GTP complex up to the GTP hydrolysis stage on the ribosome. This Syntrophotalea carbinolica (strain DSM 2380 / NBRC 103641 / GraBd1) (Pelobacter carbinolicus) protein is Elongation factor Ts.